An 80-amino-acid chain; its full sequence is Small ribosomal subunit protein uS17 (80 aa).

The protein belongs to the universal ribosomal protein uS17 family. Part of the 30S ribosomal subunit.

In terms of biological role, one of the primary rRNA binding proteins, it binds specifically to the 5'-end of 16S ribosomal RNA. The chain is Small ribosomal subunit protein uS17 from Brucella suis (strain ATCC 23445 / NCTC 10510).